The primary structure comprises 1058 residues: Carbamoyl phosphate synthase large chain (1058 aa).

The tract at residues 1-401 (MPKRTDIQKI…SLLKACRSLE (401 aa)) is carboxyphosphate synthetic domain. Arginine 129, arginine 169, glycine 175, glycine 176, arginine 208, isoleucine 210, glutamate 215, glycine 241, isoleucine 242, histidine 243, glutamine 284, and glutamate 298 together coordinate ATP. Residues 133–327 (KQLMEELEQP…IAKLAAKIAV (195 aa)) enclose the ATP-grasp 1 domain. Glutamine 284, glutamate 298, and asparagine 300 together coordinate Mg(2+). Positions 284, 298, and 300 each coordinate Mn(2+). The tract at residues 402–546 (IGVHHNEIPE…YSTYGWENES (145 aa)) is oligomerization domain. The interval 547–929 (IRSDKESVLV…ALYKAFEASY (383 aa)) is carbamoyl phosphate synthetic domain. The 191-residue stretch at 671-861 (EQALKELDIP…MAQVATKLIL (191 aa)) folds into the ATP-grasp 2 domain. Positions 707, 746, 748, 752, 777, 778, 779, 780, 820, and 832 each coordinate ATP. Glutamine 820, glutamate 832, and asparagine 834 together coordinate Mg(2+). Positions 820, 832, and 834 each coordinate Mn(2+). Residues 930 to 1058 (LHLPTFGNVV…ESRSFVTEAI (129 aa)) form the MGS-like domain. The interval 930–1058 (LHLPTFGNVV…ESRSFVTEAI (129 aa)) is allosteric domain.

Belongs to the CarB family. Composed of two chains; the small (or glutamine) chain promotes the hydrolysis of glutamine to ammonia, which is used by the large (or ammonia) chain to synthesize carbamoyl phosphate. Tetramer of heterodimers (alpha,beta)4. Requires Mg(2+) as cofactor. Mn(2+) is required as a cofactor.

The enzyme catalyses hydrogencarbonate + L-glutamine + 2 ATP + H2O = carbamoyl phosphate + L-glutamate + 2 ADP + phosphate + 2 H(+). The catalysed reaction is hydrogencarbonate + NH4(+) + 2 ATP = carbamoyl phosphate + 2 ADP + phosphate + 2 H(+). Its pathway is amino-acid biosynthesis; L-arginine biosynthesis; carbamoyl phosphate from bicarbonate: step 1/1. The protein operates within pyrimidine metabolism; UMP biosynthesis via de novo pathway; (S)-dihydroorotate from bicarbonate: step 1/3. Large subunit of the glutamine-dependent carbamoyl phosphate synthetase (CPSase). CPSase catalyzes the formation of carbamoyl phosphate from the ammonia moiety of glutamine, carbonate, and phosphate donated by ATP, constituting the first step of 2 biosynthetic pathways, one leading to arginine and/or urea and the other to pyrimidine nucleotides. The large subunit (synthetase) binds the substrates ammonia (free or transferred from glutamine from the small subunit), hydrogencarbonate and ATP and carries out an ATP-coupled ligase reaction, activating hydrogencarbonate by forming carboxy phosphate which reacts with ammonia to form carbamoyl phosphate. This is Carbamoyl phosphate synthase large chain from Streptococcus pneumoniae (strain ATCC BAA-255 / R6).